The sequence spans 187 residues: Large ribosomal subunit protein uL22 (187 aa).

This sequence belongs to the universal ribosomal protein uL22 family.

The polypeptide is Large ribosomal subunit protein uL22 (RPL17) (Theileria annulata).